The following is a 340-amino-acid chain: Quinic acid degradation cluster protein x (340 aa).

5 residues coordinate Mg(2+): Glu90, Asp115, Leu117, Asp118, and Asp262. Glu90 contributes to the substrate binding site. Substrate contacts are provided by residues 117 to 120 (LDGT) and Asp262.

It belongs to the inositol monophosphatase superfamily.

Its function is as follows. Part of the qa gene cluster that mediates the catabolism of quinic acid (QA) and as such, allows the use of QA as a sole carbon source. Its function within the pathway has not been determined yet but it probably plays a regulatory role. The qa cluster encodes 3 inducible enymes (qa-2, qa-3 and qa-4) catalyzing the first three reactions in the catabolism of quinic acid to protocatechuic acid (also known as 3,4-Dihydroxybenzoic acid). The polypeptide is Quinic acid degradation cluster protein x (Neurospora crassa (strain ATCC 24698 / 74-OR23-1A / CBS 708.71 / DSM 1257 / FGSC 987)).